The primary structure comprises 346 residues: Hydroxycarboxylic acid receptor 1 (346 aa).

Topologically, residues Met1 to Leu21 are extracellular. N-linked (GlcNAc...) asparagine glycosylation occurs at Asn3. Residues Leu22 to Phe42 traverse the membrane as a helical segment. At His43–Pro49 the chain is on the cytoplasmic side. Residues Ser50–Phe70 form a helical membrane-spanning segment. Over Arg71–Arg89 the chain is Extracellular. Cys88 and Cys165 are disulfide-bonded. The chain crosses the membrane as a helical span at residues Val90–Ala110. Residues Ala111–Arg130 are Cytoplasmic-facing. The helical transmembrane segment at Val131–Leu151 threads the bilayer. At Leu152–Gln182 the chain is on the extracellular side. The chain crosses the membrane as a helical span at residues Leu183–Leu203. At Arg204–Arg220 the chain is on the cytoplasmic side. Residues Phe221–Leu241 traverse the membrane as a helical segment. Residues Tyr242 to His261 lie on the Extracellular side of the membrane. Residues Ile262–Ser281 traverse the membrane as a helical segment. Residues Ser282–His346 lie on the Cytoplasmic side of the membrane.

This sequence belongs to the G-protein coupled receptor 1 family. As to expression, expressed abundantly in brown and white fat. It also detectable at lower levels in liver, kidney, skeletal muscle, brain and pituitary. Not detected in frontal, temporal and occipital lobes of the cortex, basal forebrain, caudate nucleus, nucleus accumbens and hippocampus.

The protein localises to the cell membrane. In terms of biological role, acts as a receptor for L-lactate and mediates its anti-lipolytic effect through a G(i)-protein-mediated pathway. The polypeptide is Hydroxycarboxylic acid receptor 1 (HCAR1) (Homo sapiens (Human)).